A 192-amino-acid polypeptide reads, in one-letter code: Ion-translocating oxidoreductase complex subunit A (192 aa).

6 consecutive transmembrane segments (helical) span residues 5 to 25 (LLLL…FLGL), 39 to 59 (IGMG…AYLV), 63 to 83 (ILTP…VIAV), 102 to 122 (LLGI…VALL), 134 to 154 (IIYG…FAAM), and 171 to 191 (SIAM…TGLV).

Belongs to the NqrDE/RnfAE family. As to quaternary structure, the complex is composed of six subunits: RnfA, RnfB, RnfC, RnfD, RnfE and RnfG.

It localises to the cell inner membrane. In terms of biological role, part of a membrane-bound complex that couples electron transfer with translocation of ions across the membrane. The protein is Ion-translocating oxidoreductase complex subunit A of Vibrio atlanticus (strain LGP32) (Vibrio splendidus (strain Mel32)).